The sequence spans 226 residues: N-acetylmuramic acid 6-phosphate phosphatase (226 aa).

Catalysis depends on Asp-12, which acts as the Nucleophile. The Mg(2+) site is built by Asp-12, Asp-14, and Asp-171. The active-site Proton donor is the Asp-14.

This sequence belongs to the HAD-like hydrolase superfamily. CbbY/CbbZ/Gph/YieH family. Phosphatase MupP subfamily. Mg(2+) is required as a cofactor.

It catalyses the reaction N-acetyl-D-muramate 6-phosphate + H2O = N-acetyl-D-muramate + phosphate. Its pathway is cell wall biogenesis; peptidoglycan recycling. Specifically catalyzes the dephosphorylation of N-acetylmuramate 6-phosphate (MurNAc-6P) to MurNac. Is involved in peptidoglycan recycling as part of a cell wall recycling pathway that bypasses de novo biosynthesis of the peptidoglycan precursor UDP-MurNAc. Plays a role in intrinsic resistance to fosfomycin, which targets the de novo synthesis of UDP-MurNAc. The protein is N-acetylmuramic acid 6-phosphate phosphatase of Pseudomonas aeruginosa (strain ATCC 15692 / DSM 22644 / CIP 104116 / JCM 14847 / LMG 12228 / 1C / PRS 101 / PAO1).